Reading from the N-terminus, the 833-residue chain is Leucine--tRNA ligase (833 aa).

A 'HIGH' region motif is present at residues 41 to 52; the sequence is PYPSGAGLHVGH. Residues 610–614 carry the 'KMSKS' region motif; that stretch reads KMSKS. Lysine 613 serves as a coordination point for ATP.

It belongs to the class-I aminoacyl-tRNA synthetase family.

The protein localises to the cytoplasm. It catalyses the reaction tRNA(Leu) + L-leucine + ATP = L-leucyl-tRNA(Leu) + AMP + diphosphate. This is Leucine--tRNA ligase from Streptococcus pneumoniae serotype 4 (strain ATCC BAA-334 / TIGR4).